The sequence spans 445 residues: Phosphoglucosamine mutase (445 aa).

Serine 102 serves as the catalytic Phosphoserine intermediate. Serine 102, aspartate 241, aspartate 243, and aspartate 245 together coordinate Mg(2+). Residue serine 102 is modified to Phosphoserine.

It belongs to the phosphohexose mutase family. Requires Mg(2+) as cofactor. Activated by phosphorylation.

The enzyme catalyses alpha-D-glucosamine 1-phosphate = D-glucosamine 6-phosphate. In terms of biological role, catalyzes the conversion of glucosamine-6-phosphate to glucosamine-1-phosphate. This chain is Phosphoglucosamine mutase, found in Aliivibrio fischeri (strain MJ11) (Vibrio fischeri).